The sequence spans 245 residues: Large ribosomal subunit protein uL2 (245 aa).

A disordered region spans residues Ser-196–Phe-226.

Belongs to the universal ribosomal protein uL2 family. In terms of assembly, part of the 50S ribosomal subunit. Forms a bridge to the 30S subunit in the 70S ribosome.

In terms of biological role, one of the primary rRNA binding proteins. Required for association of the 30S and 50S subunits to form the 70S ribosome, for tRNA binding and peptide bond formation. It has been suggested to have peptidyltransferase activity; this is somewhat controversial. Makes several contacts with the 16S rRNA in the 70S ribosome. The chain is Large ribosomal subunit protein uL2 from Pyrobaculum neutrophilum (strain DSM 2338 / JCM 9278 / NBRC 100436 / V24Sta) (Thermoproteus neutrophilus).